We begin with the raw amino-acid sequence, 226 residues long: Respiratory nitrate reductase 2 gamma chain (226 aa).

The Periplasmic portion of the chain corresponds to 1 to 4; the sequence is MIQY. A helical transmembrane segment spans residues 5–30; it reads LNVFFYDIYPYICATVFFLGSWLRYD. The Cytoplasmic portion of the chain corresponds to 31–48; that stretch reads YGQYTWRASSSQMLDKRG. A helical transmembrane segment spans residues 49–71; it reads MVIWSNLFHIGILGIFFGHLFGM. Heme b is bound by residues histidine 57 and histidine 67. Topologically, residues 72–83 are periplasmic; it reads LTPHWMYAWFLP. Residues 84–113 traverse the membrane as a helical segment; sequence VAAKQLMAMVLGGICGVLTLIGGAGLLWRR. Over 114–125 the chain is Cytoplasmic; sequence LTNQRVRATSTT. The chain crosses the membrane as a helical span at residues 126–149; it reads PDIIIMSILLIQCLLGLSTIPFSA. Residues 150–183 lie on the Periplasmic side of the membrane; sequence QYPDGSEMMKLVGWAQSIVTFRGGSSEMLNGVAF. The chain crosses the membrane as a helical span at residues 184–199; that stretch reads VFRLHLVLGMTIFLLF. Residues histidine 188 and histidine 206 each coordinate heme b. Over 200 to 226 the chain is Cytoplasmic; sequence PFTRLVHVWSAPFEYFTRRYQIVRSRR.

As to quaternary structure, dimer of heterotrimers each composed of an alpha, a beta and a gamma chain. Alpha and beta are catalytic chains; gamma chains are involved in binding the enzyme complex to the cytoplasmic membrane. The cofactor is heme.

It is found in the cell inner membrane. It carries out the reaction nitrate + a quinol = a quinone + nitrite + H2O. Its function is as follows. This is a second nitrate reductase enzyme which can substitute for the NRA enzyme and allows E.coli to use nitrate as an electron acceptor during anaerobic growth. The gamma chain is a membrane-embedded heme-iron unit resembling cytochrome b, which transfers electrons from quinones to the beta subunit. The polypeptide is Respiratory nitrate reductase 2 gamma chain (narV) (Escherichia coli (strain K12)).